We begin with the raw amino-acid sequence, 454 residues long: CCA-adding enzyme (454 aa).

Serine 59 and arginine 62 together coordinate ATP. The CTP site is built by serine 59 and arginine 62. 3 residues coordinate Mg(2+): aspartate 71, aspartate 73, and aspartate 125. Positions 148, 167, and 176 each coordinate ATP. Histidine 148, lysine 167, and tyrosine 176 together coordinate CTP.

This sequence belongs to the tRNA nucleotidyltransferase/poly(A) polymerase family. Archaeal CCA-adding enzyme subfamily. In terms of assembly, homodimer. Mg(2+) is required as a cofactor.

The enzyme catalyses a tRNA precursor + 2 CTP + ATP = a tRNA with a 3' CCA end + 3 diphosphate. It catalyses the reaction a tRNA with a 3' CCA end + 2 CTP + ATP = a tRNA with a 3' CCACCA end + 3 diphosphate. Functionally, catalyzes the addition and repair of the essential 3'-terminal CCA sequence in tRNAs without using a nucleic acid template. Adds these three nucleotides in the order of C, C, and A to the tRNA nucleotide-73, using CTP and ATP as substrates and producing inorganic pyrophosphate. tRNA 3'-terminal CCA addition is required both for tRNA processing and repair. Also involved in tRNA surveillance by mediating tandem CCA addition to generate a CCACCA at the 3' terminus of unstable tRNAs. While stable tRNAs receive only 3'-terminal CCA, unstable tRNAs are marked with CCACCA and rapidly degraded. The chain is CCA-adding enzyme from Methanosarcina mazei (strain ATCC BAA-159 / DSM 3647 / Goe1 / Go1 / JCM 11833 / OCM 88) (Methanosarcina frisia).